A 128-amino-acid polypeptide reads, in one-letter code: Sulfurtransferase TusD (128 aa).

Catalysis depends on C78, which acts as the Cysteine persulfide intermediate.

Belongs to the DsrE/TusD family. In terms of assembly, heterohexamer, formed by a dimer of trimers. The hexameric TusBCD complex contains 2 copies each of TusB, TusC and TusD. The TusBCD complex interacts with TusE.

It is found in the cytoplasm. Functionally, part of a sulfur-relay system required for 2-thiolation of 5-methylaminomethyl-2-thiouridine (mnm(5)s(2)U) at tRNA wobble positions. Accepts sulfur from TusA and transfers it in turn to TusE. This Salmonella typhi protein is Sulfurtransferase TusD.